The sequence spans 320 residues: cUMP-AMP-activated phospholipase (320 aa).

The region spanning 23-204 (LALDGGGAKG…CANNPTLFAI (182 aa)) is the PNPLA domain. The short motif at 27-32 (GGGAKG) is the GXGXXG element. The GXSXG motif lies at 59–63 (GTSTG). Catalysis depends on S61, which acts as the Nucleophile. D191 serves as the catalytic Proton acceptor. A DGA/G motif is present at residues 191 to 193 (DGG).

This sequence belongs to the patatin family.

It catalyses the reaction a 1,2-diacyl-sn-glycero-3-phosphocholine + H2O = a 2-acyl-sn-glycero-3-phosphocholine + a fatty acid + H(+). With respect to regulation, phospholipase activity is specifically activated upon 3',3'-cUAMP binding. Is not activated by the other cyclic dinucleotides 3',3'-cGAMP, 3',3'-c-diAMP and 3',3'-c-diGMP. Therefore, is specifically activated by only the nucleotide synthesized from its adjacently encoded nucleotidyltransferase (CdnE). In terms of biological role, effector phospholipase of a CBASS antivirus system. CBASS (cyclic oligonucleotide-based antiphage signaling system) provides immunity against bacteriophage. The CD-NTase protein synthesizes cyclic nucleotides in response to infection; these serve as specific second messenger signals. The signals activate a diverse range of effectors, leading to bacterial cell death and thus abortive phage infection. A type II-A(UA) CBASS system. Its function is as follows. Phospholipase that is activated upon binding to the cyclic dinucleotide (CDN) second messenger 3',3'-cyclic UMP-AMP (3',3'-cUAMP). This chain is cUMP-AMP-activated phospholipase, found in Escherichia coli.